The following is a 172-amino-acid chain: RNA pyrophosphohydrolase (172 aa).

Residues 6-149 form the Nudix hydrolase domain; that stretch reads GFRANVGIII…KRDVYRKVMK (144 aa). The Nudix box motif lies at 38–59; sequence GGLDDGESAEEAMYRELYEEVG.

It belongs to the Nudix hydrolase family. RppH subfamily. Requires a divalent metal cation as cofactor.

Functionally, accelerates the degradation of transcripts by removing pyrophosphate from the 5'-end of triphosphorylated RNA, leading to a more labile monophosphorylated state that can stimulate subsequent ribonuclease cleavage. The sequence is that of RNA pyrophosphohydrolase from Shewanella denitrificans (strain OS217 / ATCC BAA-1090 / DSM 15013).